The chain runs to 403 residues: Phosphoserine phosphatase RsbP (403 aa).

Residues 1-42 (MDKQLNDAPCGFLALSEEGSIIAANRTLIKILDYEPEQVIGQ) form the PAS domain. A PPM-type phosphatase domain is found at 191-402 (QVQIDSYYNA…DDECFILVDV (212 aa)).

Mn(2+) serves as cofactor.

It carries out the reaction O-phospho-L-serine + H2O = L-serine + phosphate. It catalyses the reaction O-phospho-D-serine + H2O = D-serine + phosphate. Functionally, positive regulator of sigma-B activity. Dephosphorylates RsbV in response to energy stress. This chain is Phosphoserine phosphatase RsbP (rsbP), found in Bacillus subtilis (strain 168).